The chain runs to 534 residues: High-affinity nicotinic acid transporter (534 aa).

At Met-1–Asn-130 the chain is on the extracellular side. Residues Ser-21–Glu-56 form a disordered region. Ser-27 bears the Phosphoserine mark. Residues Thr-131–Leu-151 traverse the membrane as a helical segment. A topological domain (cytoplasmic) is located at residue Lys-152. A helical membrane pass occupies residues Ile-153–Gly-173. Over Thr-174–Arg-187 the chain is Extracellular. Residues Leu-188–Cys-208 form a helical membrane-spanning segment. Topologically, residues Tyr-209–Arg-217 are cytoplasmic. The helical transmembrane segment at Phe-218–Gly-238 threads the bilayer. Topologically, residues Cys-239 to Gln-250 are extracellular. The chain crosses the membrane as a helical span at residues Tyr-251 to Leu-271. The Cytoplasmic segment spans residues Ser-272–Ala-323. Residue Lys-283 forms a Glycyl lysine isopeptide (Lys-Gly) (interchain with G-Cter in ubiquitin) linkage. Residues Val-324 to Ile-344 traverse the membrane as a helical segment. Over Thr-345–Gln-355 the chain is Extracellular. A helical membrane pass occupies residues Leu-356–Ser-376. The Cytoplasmic portion of the chain corresponds to Asp-377 to Pro-384. Residues Phe-385–Val-405 traverse the membrane as a helical segment. Topologically, residues His-406–Tyr-410 are extracellular. Residues Phe-411 to Leu-431 form a helical membrane-spanning segment. At Ser-432 to Ala-444 the chain is on the cytoplasmic side. The helical transmembrane segment at Leu-445–Ala-465 threads the bilayer. Residues Lys-466 to Gly-474 lie on the Extracellular side of the membrane. Residues Leu-475 to Leu-495 traverse the membrane as a helical segment. Topologically, residues Tyr-496–Tyr-534 are cytoplasmic.

This sequence belongs to the major facilitator superfamily. Allantoate permease family.

The protein resides in the membrane. Involved in the uptake of nicotinic acid. The chain is High-affinity nicotinic acid transporter (TNA1) from Saccharomyces cerevisiae (strain ATCC 204508 / S288c) (Baker's yeast).